Consider the following 129-residue polypeptide: uncharacterized protein (129 aa).

The chain crosses the membrane as a helical span at residues 103–125 (AISSAFQYGLSTSNFFFIFLYIF).

It is found in the membrane. This is an uncharacterized protein from Acanthamoeba polyphaga (Amoeba).